A 669-amino-acid chain; its full sequence is Glutaminase kidney isoform, mitochondrial (669 aa).

The N-terminal 54 residues, 1-54 (MMRLRGSGMLRDLLLRSPAGVSATLRRAQPLVTLCRRPRGGGRPAAGPAAAARL), are a transit peptide targeting the mitochondrion. A disordered region spans residues 68-118 (LARGLSSSPSEILQELGKGSTHPQPGVSPPAAPAAPGPKDGPGETDAFGNS). Positions 93–103 (GVSPPAAPAAP) are enriched in pro residues. 2 positions are modified to N6-succinyllysine: Lys-130 and Lys-164. Position 286 (Ser-286) interacts with substrate. At Lys-311 the chain carries N6-acetyllysine. A highly mobile activation loop region spans residues 315-322 (GLRFNKLF). Substrate-binding residues include Asn-335, Glu-381, Asn-388, Tyr-414, Tyr-466, and Val-484. 2 ANK repeats span residues 585-614 (DSRT…VNPF) and 619-648 (WNNT…QYTP). A disordered region spans residues 647-669 (TPQGDSDNGKENQTVHKNLDGLL). Phosphoserine is present on Ser-652. Basic and acidic residues predominate over residues 653 to 669 (DNGKENQTVHKNLDGLL).

Belongs to the glutaminase family. Homotetramer, dimer of dimers. The tetramers can assemble into rod-like oligomers (in vitro), but the physiological significance of this is not clear. Interacts with RAF1 and MAP2K2. Interacts with ATCAY; the interaction is direct and may control GLS localization, negatively regulating its activity. Post-translationally, synthesized as a 74-kDa cytosolic precursor which is proteolytically processed by the mitochondrial-processing peptidase (MPP) via a 72-kDa intermediate to yield the mature mitochondrial 68- and 65-kDa subunits. As to expression, isoform 1 and isoform 3 are detected in brain cortex. Isoform 3 is highly expressed in astrocytoma, ganglioglioma and ependymoma. Isoform 1 is highly expressed in brain and kidney, but not detected in liver. Isoform 3 is highly expressed in heart and pancreas, detected at lower levels in placenta, lung, pancreas and kidney, but is not detected in liver. Isoform 2 is expressed in cardiac and skeletal muscle.

The protein localises to the mitochondrion. Its subcellular location is the cytoplasm. The protein resides in the cytosol. It is found in the mitochondrion matrix. It catalyses the reaction L-glutamine + H2O = L-glutamate + NH4(+). Its activity is regulated as follows. Isoform 1 and isoform 3 are activated by phosphate. Inhibited by BPTES. BPTES binds between subunits and favors dissociation of the tetramer into dimers. Inhibited by 6-diazo-5-oxo-L-norleucine (DON). Enzyme activity is stimulated by phosphorylation. Catalyzes the first reaction in the primary pathway for the renal catabolism of glutamine. Plays a role in maintaining acid-base homeostasis. Regulates the levels of the neurotransmitter glutamate, the main excitatory neurotransmitter in the brain. In terms of biological role, lacks catalytic activity. The chain is Glutaminase kidney isoform, mitochondrial (GLS) from Homo sapiens (Human).